We begin with the raw amino-acid sequence, 351 residues long: Cytochrome c biogenesis protein CcsA (351 aa).

The next 8 helical transmembrane spans lie at 17–37 (VLFL…LPAI), 38–58 (NALG…LLGA), 68–88 (LSNL…VHLI), 97–117 (LVGV…TLTL), 143–163 (MMLS…FLVI), 259–279 (IIGL…VWAN), 286–306 (WSWD…AAYL), and 320–340 (AILA…VNLL).

Belongs to the CcmF/CycK/Ccl1/NrfE/CcsA family. In terms of assembly, may interact with ccs1.

It localises to the cellular thylakoid membrane. Functionally, required during biogenesis of c-type cytochromes (cytochrome c6 and cytochrome f) at the step of heme attachment. The polypeptide is Cytochrome c biogenesis protein CcsA (Nostoc sp. (strain PCC 7120 / SAG 25.82 / UTEX 2576)).